Reading from the N-terminus, the 152-residue chain is Deoxyuridine 5'-triphosphate nucleotidohydrolase (152 aa).

Residues 71-73 (RSG), Asn84, 88-90 (LID), and Met98 each bind substrate.

Belongs to the dUTPase family. Mg(2+) is required as a cofactor.

The enzyme catalyses dUTP + H2O = dUMP + diphosphate + H(+). It functions in the pathway pyrimidine metabolism; dUMP biosynthesis; dUMP from dCTP (dUTP route): step 2/2. This enzyme is involved in nucleotide metabolism: it produces dUMP, the immediate precursor of thymidine nucleotides and it decreases the intracellular concentration of dUTP so that uracil cannot be incorporated into DNA. In Shewanella loihica (strain ATCC BAA-1088 / PV-4), this protein is Deoxyuridine 5'-triphosphate nucleotidohydrolase.